We begin with the raw amino-acid sequence, 220 residues long: Deoxyribose-phosphate aldolase (220 aa).

Asp89 serves as the catalytic Proton donor/acceptor. Lys151 acts as the Schiff-base intermediate with acetaldehyde in catalysis. The Proton donor/acceptor role is filled by Lys180.

It belongs to the DeoC/FbaB aldolase family. DeoC type 1 subfamily.

Its subcellular location is the cytoplasm. The enzyme catalyses 2-deoxy-D-ribose 5-phosphate = D-glyceraldehyde 3-phosphate + acetaldehyde. Its pathway is carbohydrate degradation; 2-deoxy-D-ribose 1-phosphate degradation; D-glyceraldehyde 3-phosphate and acetaldehyde from 2-deoxy-alpha-D-ribose 1-phosphate: step 2/2. Functionally, catalyzes a reversible aldol reaction between acetaldehyde and D-glyceraldehyde 3-phosphate to generate 2-deoxy-D-ribose 5-phosphate. The sequence is that of Deoxyribose-phosphate aldolase from Streptococcus pneumoniae serotype 2 (strain D39 / NCTC 7466).